Here is a 659-residue protein sequence, read N- to C-terminus: Threonine--tRNA ligase (659 aa).

Residues aspartate 7–threonine 70 form the TGS domain. The interval aspartate 253–proline 555 is catalytic. Residues cysteine 351, histidine 402, and histidine 532 each contribute to the Zn(2+) site.

It belongs to the class-II aminoacyl-tRNA synthetase family. As to quaternary structure, homodimer. The cofactor is Zn(2+).

It is found in the cytoplasm. The catalysed reaction is tRNA(Thr) + L-threonine + ATP = L-threonyl-tRNA(Thr) + AMP + diphosphate + H(+). Its function is as follows. Catalyzes the attachment of threonine to tRNA(Thr) in a two-step reaction: L-threonine is first activated by ATP to form Thr-AMP and then transferred to the acceptor end of tRNA(Thr). Also edits incorrectly charged L-seryl-tRNA(Thr). This Chloroherpeton thalassium (strain ATCC 35110 / GB-78) protein is Threonine--tRNA ligase.